Reading from the N-terminus, the 225-residue chain is Ribonuclease 3 (225 aa).

The RNase III domain maps to 7-129 (IPRLCRTLGY…IIGAVYLDSD (123 aa)). Residue glutamate 42 participates in Mg(2+) binding. Aspartate 46 is an active-site residue. Mg(2+) contacts are provided by aspartate 115 and glutamate 118. Glutamate 118 is an active-site residue. The DRBM domain occupies 155–225 (DPKTLLQELL…AAQALELIKR (71 aa)).

This sequence belongs to the ribonuclease III family. Homodimer. Requires Mg(2+) as cofactor.

The protein resides in the cytoplasm. It carries out the reaction Endonucleolytic cleavage to 5'-phosphomonoester.. Functionally, digests double-stranded RNA. Involved in the processing of primary rRNA transcript to yield the immediate precursors to the large and small rRNAs (23S and 16S). Processes some mRNAs, and tRNAs when they are encoded in the rRNA operon. Processes pre-crRNA and tracrRNA of type II CRISPR loci if present in the organism. The polypeptide is Ribonuclease 3 (Shewanella woodyi (strain ATCC 51908 / MS32)).